The primary structure comprises 254 residues: Putative epimerase LsrE (254 aa).

Residues 14–34 traverse the membrane as a helical segment; it reads VALLASYPLSVGILAGQWIAL. Residues His-50, Asp-52, and His-81 each coordinate a divalent metal cation. Asp-52 serves as the catalytic Proton acceptor. Substrate contacts are provided by residues His-81, 166–169, 199–201, and 221–222; these read GYGS, DGS, and GS. A divalent metal cation is bound at residue Asp-199. Asp-199 (proton donor) is an active-site residue.

Belongs to the ribulose-phosphate 3-epimerase family. It depends on a divalent metal cation as a cofactor.

The protein localises to the cell membrane. The sequence is that of Putative epimerase LsrE (lsrE) from Salmonella typhi.